The chain runs to 262 residues: Hydroxyethylthiazole kinase (262 aa).

Methionine 44 contributes to the substrate binding site. ATP-binding residues include arginine 118 and threonine 166. Glycine 193 contributes to the substrate binding site.

The protein belongs to the Thz kinase family. Requires Mg(2+) as cofactor.

It catalyses the reaction 5-(2-hydroxyethyl)-4-methylthiazole + ATP = 4-methyl-5-(2-phosphooxyethyl)-thiazole + ADP + H(+). It functions in the pathway cofactor biosynthesis; thiamine diphosphate biosynthesis; 4-methyl-5-(2-phosphoethyl)-thiazole from 5-(2-hydroxyethyl)-4-methylthiazole: step 1/1. Its function is as follows. Catalyzes the phosphorylation of the hydroxyl group of 4-methyl-5-beta-hydroxyethylthiazole (THZ). This Chlamydia felis (strain Fe/C-56) (Chlamydophila felis) protein is Hydroxyethylthiazole kinase.